We begin with the raw amino-acid sequence, 416 residues long: Signal recognition particle receptor FtsY (416 aa).

Over residues 1–10 (MFSFFRRKKK) the composition is skewed to basic residues. The interval 1–24 (MFSFFRRKKKQETPALEEAQVQET) is disordered. GTP is bound by residues 224 to 231 (GINGAGKT), 304 to 308 (DTAGR), and 368 to 371 (TKLD).

Belongs to the GTP-binding SRP family. FtsY subfamily. In terms of assembly, part of the signal recognition particle protein translocation system, which is composed of SRP and FtsY. SRP is a ribonucleoprotein composed of Ffh and a 4.5S RNA molecule. The cofactor is Mg(2+).

It localises to the cell membrane. Its subcellular location is the cytoplasm. The catalysed reaction is GTP + H2O = GDP + phosphate + H(+). Its function is as follows. Involved in targeting and insertion of nascent membrane proteins into the cytoplasmic membrane. Acts as a receptor for the complex formed by the signal recognition particle (SRP) and the ribosome-nascent chain (RNC). Interaction with SRP-RNC leads to the transfer of the RNC complex to the Sec translocase for insertion into the membrane, the hydrolysis of GTP by both Ffh and FtsY, and the dissociation of the SRP-FtsY complex into the individual components. The sequence is that of Signal recognition particle receptor FtsY from Neisseria gonorrhoeae.